The primary structure comprises 89 residues: uncharacterized protein (89 aa).

The next 3 helical transmembrane spans lie at 5 to 25, 36 to 56, and 67 to 87; these read AYLV…KRKA, RLWL…MQTF, and YGVP…YSPF.

Its subcellular location is the cell membrane. This is an uncharacterized protein from Bacillus subtilis (strain 168).